We begin with the raw amino-acid sequence, 145 residues long: D-aminoacyl-tRNA deacylase (145 aa).

The short motif at 137–138 is the Gly-cisPro motif, important for rejection of L-amino acids element; it reads GP.

This sequence belongs to the DTD family. As to quaternary structure, homodimer.

It localises to the cytoplasm. The enzyme catalyses glycyl-tRNA(Ala) + H2O = tRNA(Ala) + glycine + H(+). It carries out the reaction a D-aminoacyl-tRNA + H2O = a tRNA + a D-alpha-amino acid + H(+). Its function is as follows. An aminoacyl-tRNA editing enzyme that deacylates mischarged D-aminoacyl-tRNAs. Also deacylates mischarged glycyl-tRNA(Ala), protecting cells against glycine mischarging by AlaRS. Acts via tRNA-based rather than protein-based catalysis; rejects L-amino acids rather than detecting D-amino acids in the active site. By recycling D-aminoacyl-tRNA to D-amino acids and free tRNA molecules, this enzyme counteracts the toxicity associated with the formation of D-aminoacyl-tRNA entities in vivo and helps enforce protein L-homochirality. In Teredinibacter turnerae (strain ATCC 39867 / T7901), this protein is D-aminoacyl-tRNA deacylase.